Consider the following 79-residue polypeptide: ATP synthase subunit c (79 aa).

A run of 2 helical transmembrane segments spans residues M11 to L31 and F53 to Y73.

It belongs to the ATPase C chain family. As to quaternary structure, F-type ATPases have 2 components, F(1) - the catalytic core - and F(0) - the membrane proton channel. F(1) has five subunits: alpha(3), beta(3), gamma(1), delta(1), epsilon(1). F(0) has three main subunits: a(1), b(2) and c(10-14). The alpha and beta chains form an alternating ring which encloses part of the gamma chain. F(1) is attached to F(0) by a central stalk formed by the gamma and epsilon chains, while a peripheral stalk is formed by the delta and b chains.

The protein localises to the cell inner membrane. Its function is as follows. F(1)F(0) ATP synthase produces ATP from ADP in the presence of a proton or sodium gradient. F-type ATPases consist of two structural domains, F(1) containing the extramembraneous catalytic core and F(0) containing the membrane proton channel, linked together by a central stalk and a peripheral stalk. During catalysis, ATP synthesis in the catalytic domain of F(1) is coupled via a rotary mechanism of the central stalk subunits to proton translocation. Functionally, key component of the F(0) channel; it plays a direct role in translocation across the membrane. A homomeric c-ring of between 10-14 subunits forms the central stalk rotor element with the F(1) delta and epsilon subunits. The protein is ATP synthase subunit c of Pectobacterium atrosepticum (strain SCRI 1043 / ATCC BAA-672) (Erwinia carotovora subsp. atroseptica).